The following is a 489-amino-acid chain: Argininosuccinate lyase (489 aa).

A disordered region spans residues 462–489 (QARYQQTEPAEEPPLPPSSPGSGLPLES).

It belongs to the lyase 1 family. Argininosuccinate lyase subfamily.

It localises to the cytoplasm. It catalyses the reaction 2-(N(omega)-L-arginino)succinate = fumarate + L-arginine. Its pathway is amino-acid biosynthesis; L-arginine biosynthesis; L-arginine from L-ornithine and carbamoyl phosphate: step 3/3. In Synechococcus sp. (strain JA-3-3Ab) (Cyanobacteria bacterium Yellowstone A-Prime), this protein is Argininosuccinate lyase.